The following is a 434-amino-acid chain: MKLFGSSGIRGIVNKEVTPELALQVGLVLGSRKKTAVIGRDPRVSAPMIEHALVAGLTAAGCDVTKVGMVTTPTLAYAAREYECGVMVTASHNPSEYVGIKLWNPDGMAFDSAQQEEIEDAIENENFLRVTWDLIGKVAENGNAIRDHMDLIEGLVRDSKLRVVLDCGCGAGSTITPYLLQELGCQVITLNSQPDGHFPARNPEPNDQNLSLLKKAVVAFEADFGIAHDGDADRMMAVDEKGNFVSGDELLAIFGRFECGDEKGTVVVPVDTSMMVDDYLEGSEIIRTRVGDVYVAEGIKQYGAIYGGEPSGSWIFPKISYCPDGIYAAAKLVEIVREKKLSELRAELPVYATKRGAFPCANEKKAELMEKVKTKLEPLGKVLDIDGIRVELENGWVLVRPSGTEAKVRITAEAREKVDEIYEMAEKIVKEALK.

The active-site Phosphoserine intermediate is Ser91. Mg(2+) contacts are provided by Ser91, Asp229, Asp231, and Asp233. Position 91 is a phosphoserine (Ser91).

It belongs to the phosphohexose mutase family. It depends on Mg(2+) as a cofactor. In terms of processing, activated by phosphorylation.

It catalyses the reaction alpha-D-glucosamine 1-phosphate = D-glucosamine 6-phosphate. Functionally, catalyzes the conversion of glucosamine-6-phosphate to glucosamine-1-phosphate. In Methanosarcina acetivorans (strain ATCC 35395 / DSM 2834 / JCM 12185 / C2A), this protein is Probable phosphoglucosamine mutase.